The following is a 464-amino-acid chain: uncharacterized protein (464 aa).

The first 24 residues, 1–24 (MSRFVPRIIPFYLLLLVAGGTANA), serve as a signal peptide directing secretion.

The protein belongs to the intimin/invasin family.

The protein resides in the periplasm. This is an uncharacterized protein from Escherichia coli (strain K12).